Here is a 237-residue protein sequence, read N- to C-terminus: Ribonuclease PH (237 aa).

Phosphate-binding positions include Arg86 and 124 to 126 (GTR).

The protein belongs to the RNase PH family. As to quaternary structure, homohexameric ring arranged as a trimer of dimers.

It carries out the reaction tRNA(n+1) + phosphate = tRNA(n) + a ribonucleoside 5'-diphosphate. In terms of biological role, phosphorolytic 3'-5' exoribonuclease that plays an important role in tRNA 3'-end maturation. Removes nucleotide residues following the 3'-CCA terminus of tRNAs; can also add nucleotides to the ends of RNA molecules by using nucleoside diphosphates as substrates, but this may not be physiologically important. Probably plays a role in initiation of 16S rRNA degradation (leading to ribosome degradation) during starvation. The polypeptide is Ribonuclease PH (Bradyrhizobium sp. (strain BTAi1 / ATCC BAA-1182)).